The chain runs to 274 residues: Small ribosomal subunit protein uS3 (274 aa).

Positions 38–106 constitute a KH type-2 domain; the sequence is IRRLLSSGLE…QVQLNILEVK (69 aa). Positions 215-274 are disordered; sequence AAAAPAGADRPRRERPSGTRPRRSGASGTTATGTDAGRAAGGEEAAPDAAAPVEAQSTES. Residues 238 to 266 show a composition bias toward low complexity; the sequence is SGASGTTATGTDAGRAAGGEEAAPDAAAP.

Belongs to the universal ribosomal protein uS3 family. Part of the 30S ribosomal subunit. Forms a tight complex with proteins S10 and S14.

Binds the lower part of the 30S subunit head. Binds mRNA in the 70S ribosome, positioning it for translation. The polypeptide is Small ribosomal subunit protein uS3 (Mycobacterium tuberculosis (strain ATCC 25177 / H37Ra)).